We begin with the raw amino-acid sequence, 265 residues long: tRNA pseudouridine synthase A (265 aa).

The active-site Nucleophile is the aspartate 58. Tyrosine 116 contributes to the substrate binding site.

Belongs to the tRNA pseudouridine synthase TruA family. As to quaternary structure, homodimer.

The enzyme catalyses uridine(38/39/40) in tRNA = pseudouridine(38/39/40) in tRNA. Formation of pseudouridine at positions 38, 39 and 40 in the anticodon stem and loop of transfer RNAs. This Neisseria gonorrhoeae (strain ATCC 700825 / FA 1090) protein is tRNA pseudouridine synthase A.